The primary structure comprises 478 residues: Methionine aminopeptidase 2 (478 aa).

Residues M1–D122 form a disordered region. Residue A2 is modified to N-acetylalanine. The span at K36–K46 shows a compositional bias: basic residues. Position 60 is a phosphoserine; alternate (S60). The O-linked (GlcNAc) serine; alternate glycan is linked to S60. The span at E80–A92 shows a compositional bias: acidic residues. Over residues G97 to P109 the composition is skewed to basic residues. H231 lines the substrate pocket. A divalent metal cation-binding residues include D251, D262, and H331. Position 339 (H339) interacts with substrate. Positions 364 and 459 each coordinate a divalent metal cation.

The protein belongs to the peptidase M24A family. Methionine aminopeptidase eukaryotic type 2 subfamily. Binds EIF2S1 at low magnesium concentrations. Interacts strongly with the eIF-2 gamma-subunit EIF2S3. Co(2+) is required as a cofactor. Zn(2+) serves as cofactor. The cofactor is Mn(2+). It depends on Fe(2+) as a cofactor. Post-translationally, contains approximately 12 O-linked N-acetylglucosamine (GlcNAc) residues. O-glycosylation is required for EIF2S1 binding.

It is found in the cytoplasm. The enzyme catalyses Release of N-terminal amino acids, preferentially methionine, from peptides and arylamides.. Functionally, cotranslationally removes the N-terminal methionine from nascent proteins. The N-terminal methionine is often cleaved when the second residue in the primary sequence is small and uncharged (Met-Ala-, Cys, Gly, Pro, Ser, Thr, or Val). Protects eukaryotic initiation factor EIF2S1 from translation-inhibiting phosphorylation by inhibitory kinases such as EIF2AK2/PKR and EIF2AK1/HCR. Plays a critical role in the regulation of protein synthesis. This Mus musculus (Mouse) protein is Methionine aminopeptidase 2 (Metap2).